Here is a 133-residue protein sequence, read N- to C-terminus: Otoraplin (133 aa).

Positions 1 to 23 (MAKTFYVVVIVLCLGFIHQKAYG) are cleaved as a signal peptide. Cystine bridges form between Cys35/Cys40 and Cys58/Cys132. In terms of domain architecture, SH3 spans 42–115 (YAISFGRAED…PSSLVTELTV (74 aa)).

This sequence belongs to the MIA/OTOR family.

It localises to the secreted. This Aquarana catesbeiana (American bullfrog) protein is Otoraplin (OTOR).